The sequence spans 363 residues: Cysteine proteinase 15A (363 aa).

An N-terminal signal peptide occupies residues 1 to 18; sequence MDRRFLFALFLFAAVATA. The propeptide at 19-131 is activation peptide; that stretch reads VTDDTNNDDF…QKAPILPTTN (113 aa). Disulfide bonds link Cys153/Cys203 and Cys187/Cys236. Cys156 is an active-site residue. The N-linked (GlcNAc...) asparagine glycan is linked to Asn249. Cys292 and Cys347 form a disulfide bridge. Catalysis depends on residues His299 and Asn326.

This sequence belongs to the peptidase C1 family.

In Pisum sativum (Garden pea), this protein is Cysteine proteinase 15A.